The following is a 376-amino-acid chain: Fibromodulin (376 aa).

The signal sequence occupies residues 1–18 (MQWASVLLLAGLCSLSQG). Gln-19 is subject to Pyrrolidone carboxylic acid. Sulfotyrosine is present on residues Tyr-20, Tyr-38, Tyr-53, Tyr-55, Tyr-63, and Tyr-65. An LRRNT domain is found at 67–105 (APPPPEPRDCPQECDCPPNFPTAMYCDNRNLKYLPFVPS). 8 LRR repeats span residues 106 to 127 (RMKY…VFDN), 130 to 151 (GLLW…RKVF), 156 to 176 (HLER…PLPR), 177 to 198 (SLRE…ALEG), 201 to 222 (NLTA…MRGL), 224 to 245 (SLIL…LPSA), 246 to 266 (LEQL…YFRG), and 269 to 289 (KLLY…ATNT). Asn-127 carries an N-linked (GlcNAc...) (keratan sulfate) asparagine glycan. N-linked (GlcNAc...) (keratan sulfate) asparagine glycosylation is present at Asn-166. Asn-201 is a glycosylation site (N-linked (GlcNAc...) (keratan sulfate) asparagine). Asn-291 carries an N-linked (GlcNAc...) (keratan sulfate) asparagine glycan. 2 LRR repeats span residues 294–315 (SLLE…NTNL) and 316–335 (ENLY…SFCT). Residues Cys-334 and Cys-367 are joined by a disulfide bond. N-linked (GlcNAc...) asparagine glycosylation is present at Asn-341. Residues 344-367 (KLQVLRLDGNEIKRSAMPVDAPLC) form an LRR 11 repeat.

Belongs to the small leucine-rich proteoglycan (SLRP) family. SLRP class II subfamily. Binds to type I and type II collagen. Binds keratan sulfate chains. Post-translationally, sulfated on tyrosine residue(s). As to expression, highest levels observed in knee epiphysis, in calvarial and diaphyseal bone, in nasal and costal cartilage, in the eye, and in bladder. In mature knee joint it is mostly present in the proliferating zone of growth plate. It is also observed in ligaments, especially at insertion sites, in the junction between meniscus and joint capsule, in the perimysium of skeletal muscle and in the periosteum.

The protein localises to the secreted. It localises to the extracellular space. Its subcellular location is the extracellular matrix. In terms of biological role, affects the rate of fibrils formation. May have a primary role in collagen fibrillogenesis. This chain is Fibromodulin (Fmod), found in Mus musculus (Mouse).